The following is a 714-amino-acid chain: ATP-dependent zinc metalloprotease FtsH (714 aa).

Residues 1 to 75 (MEKPRRLRPR…KNPMEPRQQQ (75 aa)) are Cytoplasmic-facing. Residues 76 to 96 (FSLWYVLVTILAMLAIQTLFV) form a helical membrane-spanning segment. Residues 97-188 (SGHVETIPYS…FVGQPDNKWL (92 aa)) are Periplasmic-facing. The helical transmembrane segment at 189–209 (STILSWVVPAVIFFGIWSFLI) threads the bilayer. At 210-714 (KRVGGAAGSM…GKPDQKTQGT (505 aa)) the chain is on the cytoplasmic side. 280–287 (GAPGTGKT) contacts ATP. Position 502 (His502) interacts with Zn(2+). Glu503 is an active-site residue. Positions 506 and 579 each coordinate Zn(2+). A disordered region spans residues 688 to 714 (PMPPPKPVANIEESTATGKPDQKTQGT). The segment covering 699–714 (EESTATGKPDQKTQGT) has biased composition (polar residues).

In the central section; belongs to the AAA ATPase family. It in the C-terminal section; belongs to the peptidase M41 family. In terms of assembly, homohexamer. Zn(2+) is required as a cofactor.

The protein resides in the cell inner membrane. Its function is as follows. Acts as a processive, ATP-dependent zinc metallopeptidase for both cytoplasmic and membrane proteins. Plays a role in the quality control of integral membrane proteins. The polypeptide is ATP-dependent zinc metalloprotease FtsH (Ralstonia pickettii (strain 12J)).